A 158-amino-acid chain; its full sequence is Protein Smg homolog (158 aa).

It belongs to the Smg family.

The sequence is that of Protein Smg homolog from Shewanella sp. (strain ANA-3).